The following is a 324-amino-acid chain: Aldo-keto reductase family 1 member A1 (324 aa).

Ser-3 is subject to Phosphoserine. Residues 10-19 (GQKMPLIGLG), Thr-20, and Trp-21 contribute to the NADP(+) site. The residue at position 37 (Ser-37) is a Phosphoserine. Residue Asp-44 coordinates NADP(+). The active-site Proton donor is Tyr-49. An N6-acetyllysine; alternate modification is found at Lys-126. Lys-126 bears the N6-succinyllysine; alternate mark. Lys-144 carries the post-translational modification N6-succinyllysine. Positions 161, 162, 210, 212, 214, 215, 262, 263, 264, 265, 268, 271, and 272 each coordinate NADP(+). At Ser-210 the chain carries Phosphoserine.

This sequence belongs to the aldo/keto reductase family.

The protein resides in the cytoplasm. It is found in the cytosol. Its subcellular location is the apical cell membrane. It carries out the reaction a primary alcohol + NADP(+) = an aldehyde + NADPH + H(+). It catalyses the reaction L-gulonate + NADP(+) = aldehydo-D-glucuronate + NADPH + H(+). The enzyme catalyses L-gulono-1,4-lactone + NADP(+) = D-glucurono-3,6-lactone + NADPH + H(+). The catalysed reaction is allyl alcohol + NADP(+) = acrolein + NADPH + H(+). It carries out the reaction glycerol + NADP(+) = D-glyceraldehyde + NADPH + H(+). It catalyses the reaction glycerol + NADP(+) = L-glyceraldehyde + NADPH + H(+). The enzyme catalyses hydroxyacetone + NADP(+) = methylglyoxal + NADPH + H(+). The catalysed reaction is 3-deoxyfructose + NADP(+) = 3-deoxyglucosone + NADPH + H(+). It carries out the reaction (R)-mevalonate + NADP(+) = (R)-mevaldate + NADPH + H(+). It catalyses the reaction S-nitroso-CoA + NADPH + H(+) = sulfinamide-CoA + NADP(+). The enzyme catalyses S-nitrosoglutathione + NADPH + H(+) = S-(hydroxysulfenamide)glutathione + NADP(+). In terms of biological role, catalyzes the NADPH-dependent reduction of a wide variety of carbonyl-containing compounds to their corresponding alcohols. Displays enzymatic activity towards endogenous metabolites such as aromatic and aliphatic aldehydes, ketones, monosaccharides and bile acids, with a preference for negatively charged substrates, such as glucuronate and succinic semialdehyde. Plays an important role by catalyzing the reduction of D-glucuronic acid and D-glucurono-gamma-lactone. Functions as a detoxifiying enzyme by reducing a range of toxic aldehydes. Reduces methylglyoxal and 3-deoxyglucosone, which are present at elevated levels under hyperglycemic conditions and are cytotoxic. Involved also in the detoxification of lipid-derived aldehydes like acrolein. Plays a role in the activation of procarcinogens, such as polycyclic aromatic hydrocarbon trans-dihydrodiols, and in the metabolism of various xenobiotics and drugs. Also acts as an inhibitor of protein S-nitrosylation by mediating degradation of S-nitroso-coenzyme A (S-nitroso-CoA), a cofactor required to S-nitrosylate proteins. S-nitroso-CoA reductase activity is involved in reprogramming intermediary metabolism in renal proximal tubules, notably by inhibiting protein S-nitrosylation of isoform 2 of PKM (PKM2). Also acts as a S-nitroso-glutathione reductase by catalyzing the NADPH-dependent reduction of S-nitrosoglutathione. Displays no reductase activity towards retinoids. The sequence is that of Aldo-keto reductase family 1 member A1 (AKR1A1) from Cricetulus griseus (Chinese hamster).